Consider the following 330-residue polypeptide: Putative F-box protein At1g57690 (330 aa).

The F-box domain maps to 25–72; that stretch reads VDIISSLPDVILQHILFSFQTKYAIRTSVLSKRWRHEADAINKALSQY.

The polypeptide is Putative F-box protein At1g57690 (Arabidopsis thaliana (Mouse-ear cress)).